The following is a 98-amino-acid chain: MSMVYFNIFMAFTVSFVGLLMYRSHLMSSLLCLEGMMLSLFVMMSMTILNNHFTLASMAPIILLVFAACEAALGLSLLVMVSNTYGTDYVQNLNLLQC.

The next 3 helical transmembrane spans lie at 1-21, 29-49, and 61-81; these read MSMVYFNIFMAFTVSFVGLLM, SLLCLEGMMLSLFVMMSMTIL, and IILLVFAACEAALGLSLLVMV.

Belongs to the complex I subunit 4L family. In terms of assembly, core subunit of respiratory chain NADH dehydrogenase (Complex I) which is composed of 45 different subunits.

The protein localises to the mitochondrion inner membrane. It carries out the reaction a ubiquinone + NADH + 5 H(+)(in) = a ubiquinol + NAD(+) + 4 H(+)(out). Its function is as follows. Core subunit of the mitochondrial membrane respiratory chain NADH dehydrogenase (Complex I) which catalyzes electron transfer from NADH through the respiratory chain, using ubiquinone as an electron acceptor. Part of the enzyme membrane arm which is embedded in the lipid bilayer and involved in proton translocation. The protein is NADH-ubiquinone oxidoreductase chain 4L (MT-ND4L) of Arctocephalus australis (South American fur seal).